Here is a 567-residue protein sequence, read N- to C-terminus: Urease subunit alpha (567 aa).

In terms of domain architecture, Urease spans 129–567; sequence GGIDTHIHFI…LPMAQRYFLF (439 aa). The Ni(2+) site is built by His134, His136, and Lys217. Residue Lys217 is modified to N6-carboxylysine. His219 is a binding site for substrate. 2 residues coordinate Ni(2+): His246 and His272. The active-site Proton donor is His320. A Ni(2+)-binding site is contributed by Asp360.

It belongs to the metallo-dependent hydrolases superfamily. Urease alpha subunit family. Probable heterotrimer of UreA (gamma), UreB (beta) and UreC (alpha) subunits. Three heterotrimers associate to form the active enzyme. The trimeric urease interacts with an accessory complex composed of UreD, UreF and UreG, which is required for the assembly of the nickel containing metallocenter of UreC. The UreE protein may also play a direct role in nickel transfer to the urease apoprotein. It depends on Ni cation as a cofactor. Post-translationally, carboxylation allows a single lysine to coordinate two nickel ions.

The protein resides in the cytoplasm. It carries out the reaction urea + 2 H2O + H(+) = hydrogencarbonate + 2 NH4(+). It participates in nitrogen metabolism; urea degradation; CO(2) and NH(3) from urea (urease route): step 1/1. This chain is Urease subunit alpha, found in Proteus mirabilis (strain HI4320).